Reading from the N-terminus, the 349-residue chain is C-X-C chemokine receptor type 4 (349 aa).

Residues 1 to 18 (MEIYTSDNYSEEVGSGDY) are important for chemokine binding and signaling. The disordered stretch occupies residues 1-23 (MEIYTSDNYSEEVGSGDYDSNKE). Residues 1–35 (MEIYTSDNYSEEVGSGDYDSNKEPCFRDENENFNR) lie on the Extracellular side of the membrane. N-linked (GlcNAc...) asparagine glycosylation is present at N8. Y9 bears the Sulfotyrosine mark. O-linked (Xyl...) (chondroitin sulfate) serine glycosylation occurs at S15. At Y18 the chain carries Sulfotyrosine. Disulfide bonds link C25–C271 and C106–C183. A helical membrane pass occupies residues 36-60 (IFLPTIYFIIFLTGIVGNGLVILVM). Over 61 to 74 (GYQKKLRSMTDKYR) the chain is Cytoplasmic. A helical membrane pass occupies residues 75-96 (LHLSVADLLFVITLPFWAVDAM). Positions 91 to 94 (WAVD) are chemokine binding. At 97-107 (ADWYFGKFLCK) the chain is on the extracellular side. A helical transmembrane segment spans residues 108–127 (AVHIIYTVNLYSSVLILAFI). The interval 110–114 (HIIYT) is chemokine binding. At 128–151 (SLDRYLAIVHATNSQRPRKLLAEK) the chain is on the cytoplasmic side. An Important for signaling motif is present at residues 130-132 (DRY). The segment at 132–144 (YLAIVHATNSQRP) is involved in dimerization; when bound to chemokine. Residues 152–171 (AVYVGVWIPALLLTIPDIIF) form a helical membrane-spanning segment. At 172 to 192 (ADVSQGDGRYICDRLYPDSLW) the chain is on the extracellular side. A chemokine binding, important for signaling region spans residues 183 to 187 (CDRLY). Residues 188 to 207 (PDSLWMVVFQFQHIMVGLIL) form an involved in dimerization region. A helical membrane pass occupies residues 193–213 (MVVFQFQHIMVGLILPGIVIL). The Cytoplasmic segment spans residues 214–238 (SCYCIIISKLSHSKGHQKRKALKTT). The helical transmembrane segment at 239-258 (VILILAFFACWLPYYVGISI) threads the bilayer. Over 259–279 (DSFILLEVIKQGCEFESVVHK) the chain is Extracellular. The involved in dimerization stretch occupies residues 263 to 265 (LLE). A helical transmembrane segment spans residues 280-299 (WISITEALAFFHCCLNPILY). Residues 300 to 349 (AFLGAKFKSSAQHALNSMSRGSSLKILSKGKRGGHSSVSTESESSSFHSS) are Cytoplasmic-facing. S316 and S318 each carry phosphoserine. Phosphoserine; by PKC and GRK6 occurs at positions 321 and 322. Positions 325 to 349 (ILSKGKRGGHSSVSTESESSSFHSS) are disordered. The residue at position 327 (S327) is a Phosphoserine; by GRK6. A Glycyl lysine isopeptide (Lys-Gly) (interchain with G-Cter in ubiquitin) cross-link involves residue K328. Residues 334 to 349 (HSSVSTESESSSFHSS) are compositionally biased toward low complexity. The residue at position 336 (S336) is a Phosphoserine; by GRK6. 2 positions are modified to phosphoserine: S345 and S348.

This sequence belongs to the G-protein coupled receptor 1 family. Monomer. Can form homodimers. Interacts with CD164. Interacts with ARRB2; the interaction is dependent on the C-terminal phosphorylation of CXCR4 and allows activation of MAPK1 and MAPK3. Interacts with ARR3; the interaction is dependent on the C-terminal phosphorylation of CXCR4 and modulates calcium mobilization. Interacts with RNF113A; the interaction, enhanced by CXCL12, promotes CXCR4 ubiquitination and subsequent degradation. Interacts (via the cytoplasmic C-terminal) with ITCH (via the WW domains I and II); the interaction, enhanced by CXCL12, promotes CXCR4 ubiquitination and leads to its degradation. Interacts with extracellular ubiquitin. Interacts with DBN1; this interaction is enhanced by antigenic stimulation. Following LPS binding, may form a complex with GDF5, HSP90AA1 and HSPA8. Phosphorylated on agonist stimulation. Rapidly phosphorylated on serine and threonine residues in the C-terminal. Phosphorylation at Ser-321 and Ser-322 leads to recruitment of ITCH, ubiquitination and protein degradation. Post-translationally, ubiquitinated after ligand binding, leading to its degradation. Ubiquitinated by ITCH at the cell membrane on agonist stimulation. The ubiquitin-dependent mechanism, endosomal sorting complex required for transport (ESCRT), then targets CXCR4 for lysosomal degradation. This process is dependent also on prior Ser-/Thr-phosphorylation in the C-terminal of CXCR4. Also binding of ARRB1 to STAM negatively regulates CXCR4 sorting to lysosomes though modulating ubiquitination of SFR5S. In terms of processing, sulfation is required for efficient binding of CXCL12/SDF-1alpha and promotes its dimerization. O- and N-glycosylated. N-glycosylation can mask coreceptor function. The O-glycosylation chondroitin sulfate attachment does not affect interaction with CXCL12/SDF-1alpha nor its coreceptor activity.

It localises to the cell membrane. The protein localises to the cell junction. It is found in the early endosome. The protein resides in the late endosome. Its subcellular location is the lysosome. In terms of biological role, receptor for the C-X-C chemokine CXCL12/SDF-1 that transduces a signal by increasing intracellular calcium ion levels and enhancing MAPK1/MAPK3 activation. Involved in the AKT signaling cascade. Plays a role in regulation of cell migration, e.g. during wound healing. Acts as a receptor for extracellular ubiquitin; leading to enhanced intracellular calcium ions and reduced cellular cAMP levels. Binds bacterial lipopolysaccharide (LPS) et mediates LPS-induced inflammatory response, including TNF secretion by monocytes. Involved in hematopoiesis and in cardiac ventricular septum formation. Also plays an essential role in vascularization of the gastrointestinal tract, probably by regulating vascular branching and/or remodeling processes in endothelial cells. Involved in cerebellar development. In the CNS, could mediate hippocampal-neuron survival. The chain is C-X-C chemokine receptor type 4 (Cxcr4) from Rattus norvegicus (Rat).